The sequence spans 280 residues: DNA repair protein RecO (280 aa).

The tract at residues 261 to 280 (DMAHGNHTGQEDLPATASGA) is disordered.

Belongs to the RecO family.

Its function is as follows. Involved in DNA repair and RecF pathway recombination. The sequence is that of DNA repair protein RecO from Mycolicibacterium smegmatis (strain ATCC 700084 / mc(2)155) (Mycobacterium smegmatis).